Reading from the N-terminus, the 493-residue chain is Xylulose kinase (493 aa).

Residue 84–85 participates in substrate binding; that stretch reads QH. Asp247 serves as the catalytic Proton acceptor.

This sequence belongs to the FGGY kinase family.

It catalyses the reaction D-xylulose + ATP = D-xylulose 5-phosphate + ADP + H(+). Functionally, catalyzes the phosphorylation of D-xylulose to D-xylulose 5-phosphate. This Haemophilus influenzae (strain ATCC 51907 / DSM 11121 / KW20 / Rd) protein is Xylulose kinase.